A 301-amino-acid chain; its full sequence is Diaminopimelate epimerase (301 aa).

Positions 15, 47, and 67 each coordinate substrate. Cysteine 76 serves as the catalytic Proton donor. Substrate is bound by residues 77–78 (GN), asparagine 163, asparagine 197, and 215–216 (ER). The Proton acceptor role is filled by cysteine 224. Residue 225-226 (GS) participates in substrate binding.

This sequence belongs to the diaminopimelate epimerase family. In terms of assembly, homodimer.

The protein resides in the cytoplasm. It catalyses the reaction (2S,6S)-2,6-diaminopimelate = meso-2,6-diaminopimelate. It functions in the pathway amino-acid biosynthesis; L-lysine biosynthesis via DAP pathway; DL-2,6-diaminopimelate from LL-2,6-diaminopimelate: step 1/1. In terms of biological role, catalyzes the stereoinversion of LL-2,6-diaminopimelate (L,L-DAP) to meso-diaminopimelate (meso-DAP), a precursor of L-lysine and an essential component of the bacterial peptidoglycan. This Rhizobium meliloti (strain 1021) (Ensifer meliloti) protein is Diaminopimelate epimerase.